The chain runs to 294 residues: Ribosomal RNA small subunit methyltransferase A (294 aa).

The S-adenosyl-L-methionine site is built by Asn-31, Leu-33, Gly-58, Glu-79, Asp-111, and Asn-136.

This sequence belongs to the class I-like SAM-binding methyltransferase superfamily. rRNA adenine N(6)-methyltransferase family. RsmA subfamily.

It is found in the cytoplasm. The enzyme catalyses adenosine(1518)/adenosine(1519) in 16S rRNA + 4 S-adenosyl-L-methionine = N(6)-dimethyladenosine(1518)/N(6)-dimethyladenosine(1519) in 16S rRNA + 4 S-adenosyl-L-homocysteine + 4 H(+). Its function is as follows. Specifically dimethylates two adjacent adenosines (A1518 and A1519) in the loop of a conserved hairpin near the 3'-end of 16S rRNA in the 30S particle. May play a critical role in biogenesis of 30S subunits. The protein is Ribosomal RNA small subunit methyltransferase A of Lactobacillus helveticus (strain DPC 4571).